Here is a 1457-residue protein sequence, read N- to C-terminus: Bridge-like lipid transfer protein family member 3B (1457 aa).

Positions 3–94 (GIIKKQILKH…DKVIMEMSTC (92 aa)) constitute a Chorein N-terminal domain. Disordered regions lie at residues 267 to 295 (STEQ…KTPQ) and 409 to 449 (DRNL…PQPS). Residues 278–295 (PTQSSTVTSSAQHVKTPQ) are compositionally biased toward polar residues. A phosphoserine mark is found at Ser-414, Ser-418, Ser-774, and Ser-934. Disordered regions lie at residues 975 to 1038 (SEDE…TGKG), 1056 to 1099 (ASLS…LSVS), and 1145 to 1183 (SNTS…TQEN). Residues 980-995 (SGLSHKSGSGEMTSEG) show a composition bias toward polar residues. The residue at position 1008 (Ser-1008) is a Phosphoserine. Over residues 1145-1180 (SNTSCQSPAESVNTSANTQTCGEASPEAVSTNSEGT) the composition is skewed to polar residues. A coiled-coil region spans residues 1410–1455 (ANFLDITREQLMEENECLRQRLAQAKMELAEAHSARDELLHQMKRM).

In terms of assembly, homodimer (via N-terminus). Associates with the Golgi-associated retrograde protein (GARP) complex. Interacts with GARP complex component VPS52. Interacts (via C-terminal coiled-coil domain) with STX6.

The protein resides in the cytoplasm. Its subcellular location is the cytosol. The protein localises to the early endosome. In terms of biological role, tube-forming lipid transport protein which mediates the transfer of lipids between membranes at organelle contact sites. Required for retrograde traffic of vesicle clusters in the early endocytic pathway to the Golgi complex. The sequence is that of Bridge-like lipid transfer protein family member 3B (Bltp3b) from Mus musculus (Mouse).